The primary structure comprises 346 residues: Phosphoribosylformylglycinamidine cyclo-ligase (346 aa).

Belongs to the AIR synthase family.

It is found in the cytoplasm. It catalyses the reaction 2-formamido-N(1)-(5-O-phospho-beta-D-ribosyl)acetamidine + ATP = 5-amino-1-(5-phospho-beta-D-ribosyl)imidazole + ADP + phosphate + H(+). It functions in the pathway purine metabolism; IMP biosynthesis via de novo pathway; 5-amino-1-(5-phospho-D-ribosyl)imidazole from N(2)-formyl-N(1)-(5-phospho-D-ribosyl)glycinamide: step 2/2. The polypeptide is Phosphoribosylformylglycinamidine cyclo-ligase (Photorhabdus laumondii subsp. laumondii (strain DSM 15139 / CIP 105565 / TT01) (Photorhabdus luminescens subsp. laumondii)).